Here is a 188-residue protein sequence, read N- to C-terminus: Molybdopterin synthase catalytic subunit (188 aa).

Low complexity predominate over residues 1-14 (MTTQPPQDQTSTTP). The disordered stretch occupies residues 1–23 (MTTQPPQDQTSTTPSLPPHLDPT). Residues 134–135 (HR), lysine 150, and 157–159 (KRE) each bind substrate.

Belongs to the MoaE family. MOCS2B subfamily. Heterotetramer; composed of 2 small (MOCS2A) and 2 large (MOCS2B) subunits.

The protein resides in the cytoplasm. The enzyme catalyses 2 [molybdopterin-synthase sulfur-carrier protein]-C-terminal-Gly-aminoethanethioate + cyclic pyranopterin phosphate + H2O = molybdopterin + 2 [molybdopterin-synthase sulfur-carrier protein]-C-terminal Gly-Gly + 2 H(+). Its pathway is cofactor biosynthesis; molybdopterin biosynthesis. In terms of biological role, catalytic subunit of the molybdopterin synthase complex, a complex that catalyzes the conversion of precursor Z into molybdopterin. Acts by mediating the incorporation of 2 sulfur atoms from thiocarboxylated MOCS2A into precursor Z to generate a dithiolene group. The protein is Molybdopterin synthase catalytic subunit of Neosartorya fischeri (strain ATCC 1020 / DSM 3700 / CBS 544.65 / FGSC A1164 / JCM 1740 / NRRL 181 / WB 181) (Aspergillus fischerianus).